Reading from the N-terminus, the 448-residue chain is Ribonuclease J (448 aa).

Zn(2+)-binding residues include His-81, His-83, Asp-85, His-86, His-151, and Asp-173. A substrate-binding site is contributed by 383 to 387; the sequence is HVSGH. Position 409 (His-409) interacts with Zn(2+).

Belongs to the metallo-beta-lactamase superfamily. RNA-metabolizing metallo-beta-lactamase-like family. Archaeal RNase J subfamily. Forms homodimers on heating to 60 degrees Celsius which may be the active form. Requires Zn(2+) as cofactor.

The protein localises to the cytoplasm. Inhibited by imidazole. In terms of biological role, a 5'-3' exoribonuclease with a strong reference for 5'-monophosphorylated RNA and no endoribonuclease activty. Also has robust 5'-'3 nuclease activity on single-stranded DNA (exodeoxyribonuclease, exoDNase). May be involved in RNA degradation. This Methanocaldococcus jannaschii (strain ATCC 43067 / DSM 2661 / JAL-1 / JCM 10045 / NBRC 100440) (Methanococcus jannaschii) protein is Ribonuclease J.